A 466-amino-acid chain; its full sequence is MSARTLFDKVWDAHTVKILPSGQTQLFIGLHLVHEVTSPQAFSMLRERGLKVLFPRRTIATVDHIVPTENQARPFLDDLAEEMIRAIETNVQTNHIPFYGIGSGNQGIVHVIAPEQGLTQPGMTIACGDSHTSTHGAFGAIAFGIGTSQVRDVLATQTLSLSKLKVRRVEVNGDLNPGVYAKDVILHIIRQLGVKGGVGYAYEYAGSTIERMSMEERMTICNMAIEGGARCGYINPDQITYDYLKGRDFAPKDWESAVNWWESIKSDADAVYDDVVVFDAGEIEPTVTWGITPGQGIGVNEVIPTPESLPASERAIAEEAYQYMKLTPGAPIKGTKIDVCFVGSCTNGRISDLREAAKFAQGHRVAPHVKAFIVPGSERVKKQAEAEGLDQIFLASGFEWREAGCSMCLAMNPDKLQGDQISASSSNRNFKGRQGSASGRTLLMSPAMVVAAAIKGEVTDPRELLN.

Positions 345, 405, and 408 each coordinate [4Fe-4S] cluster.

This sequence belongs to the aconitase/IPM isomerase family. LeuC type 1 subfamily. As to quaternary structure, heterodimer of LeuC and LeuD. It depends on [4Fe-4S] cluster as a cofactor.

The enzyme catalyses (2R,3S)-3-isopropylmalate = (2S)-2-isopropylmalate. It participates in amino-acid biosynthesis; L-leucine biosynthesis; L-leucine from 3-methyl-2-oxobutanoate: step 2/4. Functionally, catalyzes the isomerization between 2-isopropylmalate and 3-isopropylmalate, via the formation of 2-isopropylmaleate. In Microcystis aeruginosa (strain NIES-843 / IAM M-2473), this protein is 3-isopropylmalate dehydratase large subunit.